The following is a 218-amino-acid chain: 2-C-methyl-D-erythritol 4-phosphate cytidylyltransferase (218 aa).

This sequence belongs to the IspD/TarI cytidylyltransferase family. IspD subfamily.

It carries out the reaction 2-C-methyl-D-erythritol 4-phosphate + CTP + H(+) = 4-CDP-2-C-methyl-D-erythritol + diphosphate. It functions in the pathway isoprenoid biosynthesis; isopentenyl diphosphate biosynthesis via DXP pathway; isopentenyl diphosphate from 1-deoxy-D-xylulose 5-phosphate: step 2/6. Its function is as follows. Catalyzes the formation of 4-diphosphocytidyl-2-C-methyl-D-erythritol from CTP and 2-C-methyl-D-erythritol 4-phosphate (MEP). The polypeptide is 2-C-methyl-D-erythritol 4-phosphate cytidylyltransferase (Chlamydia muridarum (strain MoPn / Nigg)).